The primary structure comprises 435 residues: Asparagine--tRNA ligase (435 aa).

It belongs to the class-II aminoacyl-tRNA synthetase family. Homodimer.

It localises to the cytoplasm. The enzyme catalyses tRNA(Asn) + L-asparagine + ATP = L-asparaginyl-tRNA(Asn) + AMP + diphosphate + H(+). The sequence is that of Asparagine--tRNA ligase from Leptospira borgpetersenii serovar Hardjo-bovis (strain JB197).